The primary structure comprises 197 residues: Protein GrpE (197 aa).

Basic and acidic residues predominate over residues 1 to 27 (MTKQEKAENQEKPTEETVEETPKKETP). Residues 1-50 (MTKQEKAENQEKPTEETVEETPKKETPFEPVMEADEVEETTEAQAPVEEA) form a disordered region. The span at 32-41 (MEADEVEETT) shows a compositional bias: acidic residues.

It belongs to the GrpE family. Homodimer.

It is found in the cytoplasm. Functionally, participates actively in the response to hyperosmotic and heat shock by preventing the aggregation of stress-denatured proteins, in association with DnaK and GrpE. It is the nucleotide exchange factor for DnaK and may function as a thermosensor. Unfolded proteins bind initially to DnaJ; upon interaction with the DnaJ-bound protein, DnaK hydrolyzes its bound ATP, resulting in the formation of a stable complex. GrpE releases ADP from DnaK; ATP binding to DnaK triggers the release of the substrate protein, thus completing the reaction cycle. Several rounds of ATP-dependent interactions between DnaJ, DnaK and GrpE are required for fully efficient folding. This chain is Protein GrpE, found in Latilactobacillus sakei (Lactobacillus sakei).